A 346-amino-acid polypeptide reads, in one-letter code: FAS-associated factor 2 (346 aa).

The residue at position 68 (Lys-68) is an N6-acetyllysine. Residues 176 to 251 (SERLEREERN…EEKERKLECL (76 aa)) are a coiled coil. The disordered stretch occupies residues 200-262 (ASLRADQEKE…PEPSPDDPDS (63 aa)). Basic and acidic residues predominate over residues 204 to 249 (ADQEKERKKREERERKRRKEEEVQQQKLAEERRRQNLQEEKERKLE). Residues 258 to 340 (DDPDSVKIIF…GLSHTEVLFV (83 aa)) enclose the UBX domain.

In terms of assembly, identified in a complex that contains SEL1L, OS9, FAF2/UBXD8, UBE2J1/UBC6E and AUP1. Interacts with YOD1. Interacts (via N-terminus) with UBQLN2 (via C-terminus). Interacts with PNPLA2 and UBAC2. Interacts with ZFAND2B; probably through VCP. Interacts with LMBR1L.

It is found in the cytoplasm. Its subcellular location is the lipid droplet. The protein localises to the endoplasmic reticulum. Plays an important role in endoplasmic reticulum-associated degradation (ERAD) that mediates ubiquitin-dependent degradation of misfolded endoplasmic reticulum proteins. By controlling the steady-state expression of the IGF1R receptor, indirectly regulates the insulin-like growth factor receptor signaling pathway. Involved in inhibition of lipid droplet degradation by binding to phospholipase PNPL2 and inhibiting its activity by promoting dissociation of PNPL2 from its endogenous activator, ABHD5 which inhibits the rate of triacylglycerol hydrolysis. Involved in stress granule disassembly: associates with ubiquitinated G3BP1 in response to heat shock, thereby promoting interaction between ubiquitinated G3BP1 and VCP, followed by G3BP1 extraction from stress granules and stress granule disassembly. The chain is FAS-associated factor 2 (Faf2) from Rattus norvegicus (Rat).